The primary structure comprises 1316 residues: Tetratricopeptide repeat protein 21B (1316 aa).

19 TPR repeats span residues glutamate 108 to serine 141, histidine 145 to threonine 178, alanine 180 to phenylalanine 211, alanine 285 to glutamine 323, serine 324 to serine 357, leucine 492 to tyrosine 525, proline 563 to lysine 596, leucine 617 to threonine 650, proline 722 to aspartate 755, threonine 757 to asparagine 789, leucine 791 to asparagine 822, glycine 831 to valine 864, alanine 884 to aspartate 917, lysine 919 to asparagine 951, glutamate 952 to asparagine 985, proline 1023 to glycine 1056, glutamate 1197 to cysteine 1230, lysine 1232 to threonine 1264, and proline 1266 to tyrosine 1299.

Belongs to the TTC21 family. Component of the IFT complex A (IFT-A) complex. IFT-A complex is divided into a core subcomplex composed of IFT122:IFT140:WDR19 which is associated with TULP3 and a peripheral subcomplex composed of IFT43:WDR35:TTC21B. Interacts directy with WDR35 and TTC21B. Interacts with TTC25.

It localises to the cytoplasm. The protein resides in the cytoskeleton. The protein localises to the cilium axoneme. Functionally, component of the IFT complex A (IFT-A), a complex required for retrograde ciliary transport and entry into cilia of G protein-coupled receptors (GPCRs). Essential for retrograde trafficking of IFT-1, IFT-B and GPCRs. Negatively modulates the SHH signal transduction. In Homo sapiens (Human), this protein is Tetratricopeptide repeat protein 21B.